Reading from the N-terminus, the 392-residue chain is Probable nucleoredoxin 3 (392 aa).

Thioredoxin domains follow at residues 17–171 (LYSI…DSKR) and 177–326 (EKLL…ELKA).

This sequence belongs to the nucleoredoxin family.

The catalysed reaction is [protein]-dithiol + NAD(+) = [protein]-disulfide + NADH + H(+). It catalyses the reaction [protein]-dithiol + NADP(+) = [protein]-disulfide + NADPH + H(+). Probable thiol-disulfide oxidoreductase that may participate in various redox reactions. In Arabidopsis thaliana (Mouse-ear cress), this protein is Probable nucleoredoxin 3.